Consider the following 513-residue polypeptide: U3 small nucleolar RNA-associated protein 15 (513 aa).

WD repeat units lie at residues 37–78, 79–118, 124–162, 166–206, 210–247, and 250–294; these read KEHN…KTFS, RFKDVVYSASFRSDGKLLCAGDATGLVSVYDSYNPRTILL, THPTHVTKFHTQDNKILATASDDRVTRLWDISNAYEPQL, GATD…STPI, NHDQPVENVIAVSPTQIVSCGGNNFKVWDLTSNKKLYE, and NFNK…QVKF. Residues 332-354 form a disordered region; sequence KKKEKRSSDKENAPASFNKNAKS.

Interacts with snoRNA U3. Interacts with MPP10. Component of the ribosomal small subunit (SSU) processome composed of at least 40 protein subunits and snoRNA U3. In the absence of snoRNA3, forms a complex with other t-UTPs. This complex can associate with pre-18S ribosomal RNAs.

It is found in the nucleus. The protein localises to the nucleolus. Its function is as follows. Involved in nucleolar processing of pre-18S ribosomal RNA. Required for optimal pre-ribosomal RNA transcription by RNA polymerase I together with a subset of U3 proteins required for transcription (t-UTPs). This chain is U3 small nucleolar RNA-associated protein 15 (UTP15), found in Saccharomyces cerevisiae (strain ATCC 204508 / S288c) (Baker's yeast).